Here is a 212-residue protein sequence, read N- to C-terminus: 7-carboxy-7-deazaguanine synthase (212 aa).

Residues 22–24 and R37 contribute to the substrate site; that span reads LQG. One can recognise a Radical SAM core domain in the interval 28-212; it reads NTGMPAVFVR…VQTHKWAGIE (185 aa). [4Fe-4S] cluster contacts are provided by C41, C45, and C48. T50 contributes to the Mg(2+) binding site. Residue T78 participates in substrate binding. Residues G80 and 122 to 124 each bind S-adenosyl-L-methionine; that span reads SPK.

Belongs to the radical SAM superfamily. 7-carboxy-7-deazaguanine synthase family. In terms of assembly, homodimer. It depends on [4Fe-4S] cluster as a cofactor. Requires S-adenosyl-L-methionine as cofactor. The cofactor is Mg(2+).

It catalyses the reaction 6-carboxy-5,6,7,8-tetrahydropterin + H(+) = 7-carboxy-7-deazaguanine + NH4(+). It participates in purine metabolism; 7-cyano-7-deazaguanine biosynthesis. Catalyzes the complex heterocyclic radical-mediated conversion of 6-carboxy-5,6,7,8-tetrahydropterin (CPH4) to 7-carboxy-7-deazaguanine (CDG), a step common to the biosynthetic pathways of all 7-deazapurine-containing compounds. In Neisseria meningitidis serogroup B (strain ATCC BAA-335 / MC58), this protein is 7-carboxy-7-deazaguanine synthase.